A 270-amino-acid polypeptide reads, in one-letter code: Urease accessory protein UreD (270 aa).

Belongs to the UreD family. As to quaternary structure, ureD, UreF and UreG form a complex that acts as a GTP-hydrolysis-dependent molecular chaperone, activating the urease apoprotein by helping to assemble the nickel containing metallocenter of UreC. The complex may form in the order UreABCD, UreABCDF, UreABCDFG. The UreE protein probably delivers the nickel in a GTPase-dependent fashion.

Its subcellular location is the cytoplasm. In terms of biological role, necessary for the functional incorporation of the urease nickel metallocenter. The chain is Urease accessory protein UreD from Klebsiella aerogenes (Enterobacter aerogenes).